Here is a 353-residue protein sequence, read N- to C-terminus: Phospho-N-acetylmuramoyl-pentapeptide-transferase (353 aa).

10 helical membrane passes run 13-33 (ILGY…FFTL), 66-86 (TPTM…LISI), 88-108 (FSNL…IIGF), 130-150 (LILQ…LSDF), 162-182 (PLFD…IATS), 193-213 (GLAT…IYIT), 229-249 (IGEV…FLWY), 256-276 (VFMG…LAII), 281-301 (ILLL…ILQV), and 330-350 (KIIV…LITL).

It belongs to the glycosyltransferase 4 family. MraY subfamily. Mg(2+) serves as cofactor.

Its subcellular location is the cell inner membrane. It carries out the reaction UDP-N-acetyl-alpha-D-muramoyl-L-alanyl-gamma-D-glutamyl-meso-2,6-diaminopimeloyl-D-alanyl-D-alanine + di-trans,octa-cis-undecaprenyl phosphate = di-trans,octa-cis-undecaprenyl diphospho-N-acetyl-alpha-D-muramoyl-L-alanyl-D-glutamyl-meso-2,6-diaminopimeloyl-D-alanyl-D-alanine + UMP. Its pathway is cell wall biogenesis; peptidoglycan biosynthesis. Functionally, catalyzes the initial step of the lipid cycle reactions in the biosynthesis of the cell wall peptidoglycan: transfers peptidoglycan precursor phospho-MurNAc-pentapeptide from UDP-MurNAc-pentapeptide onto the lipid carrier undecaprenyl phosphate, yielding undecaprenyl-pyrophosphoryl-MurNAc-pentapeptide, known as lipid I. The protein is Phospho-N-acetylmuramoyl-pentapeptide-transferase of Sulfurimonas denitrificans (strain ATCC 33889 / DSM 1251) (Thiomicrospira denitrificans (strain ATCC 33889 / DSM 1251)).